The sequence spans 62 residues: DNA-directed RNA polymerase subunit Rpo10 (62 aa).

Cys6, Cys9, Cys43, and Cys44 together coordinate Zn(2+).

The protein belongs to the archaeal Rpo10/eukaryotic RPB10 RNA polymerase subunit family. In terms of assembly, part of the RNA polymerase complex. Zn(2+) is required as a cofactor.

The protein localises to the cytoplasm. It catalyses the reaction RNA(n) + a ribonucleoside 5'-triphosphate = RNA(n+1) + diphosphate. Its function is as follows. DNA-dependent RNA polymerase (RNAP) catalyzes the transcription of DNA into RNA using the four ribonucleoside triphosphates as substrates. In Methanosarcina barkeri (strain Fusaro / DSM 804), this protein is DNA-directed RNA polymerase subunit Rpo10.